Reading from the N-terminus, the 457-residue chain is Ribulose bisphosphate carboxylase-like protein (457 aa).

Mg(2+)-binding residues include Lys199, Asp201, and Glu202. N6-carboxylysine is present on Lys199. The tract at residues 426-457 is disordered; it reads AIAAFGKPAHGQAASPQPSEQASEPDAAGGDS.

Belongs to the RuBisCO large chain family. Type IV subfamily. Mg(2+) serves as cofactor.

Functionally, may be involved in sulfur metabolism and oxidative stress response. Does not show RuBisCO activity. This is Ribulose bisphosphate carboxylase-like protein from Allochromatium vinosum (strain ATCC 17899 / DSM 180 / NBRC 103801 / NCIMB 10441 / D) (Chromatium vinosum).